The primary structure comprises 170 residues: Protein-export protein SecB (170 aa).

Belongs to the SecB family. As to quaternary structure, homotetramer, a dimer of dimers. One homotetramer interacts with 1 SecA dimer.

The protein resides in the cytoplasm. Its function is as follows. One of the proteins required for the normal export of preproteins out of the cell cytoplasm. It is a molecular chaperone that binds to a subset of precursor proteins, maintaining them in a translocation-competent state. It also specifically binds to its receptor SecA. This is Protein-export protein SecB from Pasteurella multocida (strain Pm70).